The primary structure comprises 142 residues: Nucleoside diphosphate kinase (142 aa).

The ATP site is built by Lys11, Phe59, Arg87, Thr93, Arg104, and Asn114. His117 serves as the catalytic Pros-phosphohistidine intermediate.

This sequence belongs to the NDK family. In terms of assembly, homotetramer. Mg(2+) is required as a cofactor.

The protein localises to the cytoplasm. It catalyses the reaction a 2'-deoxyribonucleoside 5'-diphosphate + ATP = a 2'-deoxyribonucleoside 5'-triphosphate + ADP. It carries out the reaction a ribonucleoside 5'-diphosphate + ATP = a ribonucleoside 5'-triphosphate + ADP. Functionally, major role in the synthesis of nucleoside triphosphates other than ATP. The ATP gamma phosphate is transferred to the NDP beta phosphate via a ping-pong mechanism, using a phosphorylated active-site intermediate. This Wigglesworthia glossinidia brevipalpis protein is Nucleoside diphosphate kinase.